The sequence spans 975 residues: Glycine dehydrogenase (decarboxylating) (975 aa).

N6-(pyridoxal phosphate)lysine is present on Lys723.

The protein belongs to the GcvP family. As to quaternary structure, the glycine cleavage system is composed of four proteins: P, T, L and H. Requires pyridoxal 5'-phosphate as cofactor.

It carries out the reaction N(6)-[(R)-lipoyl]-L-lysyl-[glycine-cleavage complex H protein] + glycine + H(+) = N(6)-[(R)-S(8)-aminomethyldihydrolipoyl]-L-lysyl-[glycine-cleavage complex H protein] + CO2. In terms of biological role, the glycine cleavage system catalyzes the degradation of glycine. The P protein binds the alpha-amino group of glycine through its pyridoxal phosphate cofactor; CO(2) is released and the remaining methylamine moiety is then transferred to the lipoamide cofactor of the H protein. The polypeptide is Glycine dehydrogenase (decarboxylating) (Burkholderia ambifaria (strain ATCC BAA-244 / DSM 16087 / CCUG 44356 / LMG 19182 / AMMD) (Burkholderia cepacia (strain AMMD))).